The chain runs to 31 residues: Cytochrome b6-f complex subunit 6 (31 aa).

Residues 4–24 traverse the membrane as a helical segment; the sequence is ITSYFGFLLVALTITSALFIG.

This sequence belongs to the PetL family. As to quaternary structure, the 4 large subunits of the cytochrome b6-f complex are cytochrome b6, subunit IV (17 kDa polypeptide, PetD), cytochrome f and the Rieske protein, while the 4 small subunits are PetG, PetL, PetM and PetN. The complex functions as a dimer.

The protein resides in the plastid. It is found in the chloroplast thylakoid membrane. Component of the cytochrome b6-f complex, which mediates electron transfer between photosystem II (PSII) and photosystem I (PSI), cyclic electron flow around PSI, and state transitions. PetL is important for photoautotrophic growth as well as for electron transfer efficiency and stability of the cytochrome b6-f complex. The protein is Cytochrome b6-f complex subunit 6 of Pelargonium hortorum (Common geranium).